Consider the following 498-residue polypeptide: MDTFKVQLQEFFSAGDGADDAPCLDAPNLLEHQKRGIEWMRRRERRGRPHGGVLADDMGLGKTLSVMRLIANDGDDAHKTLIVCPLSLLNHWTAEAKKHNLPLNLRQFHGGDLDESFDDAKAVAITYDTLRAHHKHYKTAGRASGLLARHWHRVVLDEAHVIKNHQTGVHAAACALSADNRWCITGTPIHNRHWDMYAIIHFLRCRPFDNVGVWRMLNRNNDTNRIKSVVNKIVLKRNKAEIALDIPQHDVQDVHVRFDEAEARVYNELKSASQRAYDDAVASADKAGGMQDVLWLLCRLRQVCCHPALTKCAAMFPEHAHIFEPAYESSKCRRALELVQRVLDTPDDKVVLVSQWVEFLQLVAGLLRRRGVPILLYTGQLRVEERTAVENQFNAADSPYRVLLMSIKCGGVGLNLTGGNHIIMLEPHWNPQIELQAQDRIHRMGQKKRTYVYKMIVDEENSIERYMKARQDKKLTFVNKVFDRTALNYEDIKKFFSL.

A Helicase ATP-binding domain is found at 43 to 206 (RERRGRPHGG…YAIIHFLRCR (164 aa)). ATP is bound at residue 55–63 (ADDMGLGKT). Positions 157-160 (DEAH) match the DEAH box motif. Residues 337–493 (ELVQRVLDTP…RTALNYEDIK (157 aa)) form the Helicase C-terminal domain.

It belongs to the SNF2/RAD54 helicase family.

The chain is Probable global transactivator (GTA) from Orgyia pseudotsugata (Douglas-fir tussock moth).